Here is a 298-residue protein sequence, read N- to C-terminus: UDP-N-acetylenolpyruvoylglucosamine reductase (298 aa).

Positions 26-191 (KTGGAADVFV…LDATFSLALE (166 aa)) constitute an FAD-binding PCMH-type domain. Arginine 170 is a catalytic residue. Serine 220 functions as the Proton donor in the catalytic mechanism. Glutamate 290 is a catalytic residue.

It belongs to the MurB family. FAD is required as a cofactor.

It localises to the cytoplasm. It carries out the reaction UDP-N-acetyl-alpha-D-muramate + NADP(+) = UDP-N-acetyl-3-O-(1-carboxyvinyl)-alpha-D-glucosamine + NADPH + H(+). Its pathway is cell wall biogenesis; peptidoglycan biosynthesis. Its function is as follows. Cell wall formation. The chain is UDP-N-acetylenolpyruvoylglucosamine reductase from Listeria monocytogenes serovar 1/2a (strain ATCC BAA-679 / EGD-e).